Reading from the N-terminus, the 104-residue chain is Protein S100-A14 (104 aa).

In terms of domain architecture, EF-hand spans 27–61 (KNFHQYSVEGGKETLTPSELRDLVTQQLPHLMPSN).

The protein belongs to the S-100 family. In terms of assembly, homodimer. Interacts with AGER. Expressed at highest levels in colon and at moderate levels in thymus, kidney, liver, small intestine, and lung. Low expression in heart and no expression is seen in brain, skeletal muscle, spleen, placenta and peripheral blood leukocytes.

It localises to the cytoplasm. Modulates P53/TP53 protein levels, and thereby plays a role in the regulation of cell survival and apoptosis. Depending on the context, it can promote cell proliferation or apoptosis. Plays a role in the regulation of cell migration by modulating the levels of MMP2, a matrix protease that is under transcriptional control of P53/TP53. Does not bind calcium. This chain is Protein S100-A14 (S100A14), found in Homo sapiens (Human).